Reading from the N-terminus, the 430-residue chain is MKIEVKDSTMIKPSAETPGGSLWLSNLDLLSPANYHTLSVHFYSHDGSDNFFDAAGLKESLSRALVEFYPYAGRLKLNGNRLEIDCNNEGLLLVEAECDGALDELGDFAPRPELNLIPKVDYSRGISTYPLMVFQLTRFKCGGVALGVANEHHLSDGVAALHFINTWAHLSRGAPAPTPLPHFDRSSLSARNPPQPQFSHAEYQPPPTLENPLPHTDIAHSRFKLTRDQLNSLKSKFKTAPADGGAGKSYSTFEVLAGHIWRSVCIARGLPEGQETKLHIPFDGRGRLQLPPGFFGNAIFFATPIATCGEIESNSLNYAVRRVSDGVSRLDEDYLRSSIDFLELQEDISKLAQGAHSFRCPNLWVISWVWLPIYEPDFGWGKAVYMGPWAAPFEGKSYLLPNPEKDGSLFVSITLHKQHMERFEKLFYEI.

Catalysis depends on His152, which acts as the Proton acceptor. The segment at 178 to 210 (TPLPHFDRSSLSARNPPQPQFSHAEYQPPPTLE) is disordered. The active-site Proton acceptor is Asp377.

It belongs to the plant acyltransferase family.

The catalysed reaction is (2R)-3-(3,4-dihydroxyphenyl)lactate + (E)-caffeoyl-CoA = (R)-rosmarinate + CoA. Functionally, involved in the biosynthesis of rosmarinic acid, a compound with antiviral, antimicrobial and anti-inflammatory activities. Can use 4-coumaroyl- and caffeoyl-CoA as hydroxycinnamoyl donors and 4-Hydroxyphenyllactate and 3.4-Dihydroxyphenyllactate, but not shikimate or quinate, as hydroxycinnamoyl acceptors. Can also putatively catalyze amide formation with D-amino acids as acceptors. The protein is Rosmarinate synthase (RAS) of Plectranthus scutellarioides (Coleus).